Reading from the N-terminus, the 305-residue chain is Aquaporin-1 (305 aa).

Residues 1–34 (MSSNDSNDTDKQHTRLDPTGVDDAYIPPEQPETK) form a disordered region. The Cytoplasmic segment spans residues 1-48 (MSSNDSNDTDKQHTRLDPTGVDDAYIPPEQPETKHHRFKISKDTLRNH). A helical membrane pass occupies residues 49-69 (FIAAAGEFCGTFMFLWCAYVI). Residues 70-91 (CNVANHDVALVAAPDGSHPGQL) are Extracellular-facing. Residues 92–112 (IMIAIGFGFSVMFSIWCFAGV) traverse the membrane as a helical segment. The Cytoplasmic portion of the chain corresponds to 113-136 (SGGALNPAMSLSLCLARAVSPTRC). The NPA 1 motif lies at 118 to 120 (NPA). Residues 137 to 157 (VVMWVSQIVAGMAAGGAASAM) form a helical membrane-spanning segment. At 158–176 (TPGEVLFANSLGLGCSRTR) the chain is on the extracellular side. A helical transmembrane segment spans residues 177–197 (GLFLEMFGTAILCLTVLMTAV). At 198–203 (EKRETN) the chain is on the cytoplasmic side. Residues 204–224 (FMAALPIGISLFIAHVALTAY) form a helical membrane-spanning segment. Residues 225 to 248 (TGTGVNPARSLGAAVAARYFPHYH) lie on the Extracellular side of the membrane. The NPA 2 motif lies at 230–232 (NPA). Residues 249–269 (WIYWIGTLLGSILAWSVWQLL) traverse the membrane as a helical segment. Over 270-305 (QILDYTTYVTAEKAASTKEKAQKKGETSSSSAVAEV) the chain is Cytoplasmic. The span at 286-295 (TKEKAQKKGE) shows a compositional bias: basic and acidic residues. The segment at 286-305 (TKEKAQKKGETSSSSAVAEV) is disordered. Residues 296-305 (TSSSSAVAEV) show a composition bias toward polar residues.

The protein belongs to the MIP/aquaporin (TC 1.A.8) family.

The protein localises to the endoplasmic reticulum membrane. It localises to the cell membrane. In terms of biological role, water channel required to facilitate the transport of water across membranes. Involved in sporulation, freeze tolerance and osmotolerance. Is non-functional in most laboratory strains. The protein is Aquaporin-1 (AQY1) of Saccharomyces cerevisiae (strain YJM789) (Baker's yeast).